The sequence spans 166 residues: Large ribosomal subunit protein uL10 (166 aa).

This sequence belongs to the universal ribosomal protein uL10 family. In terms of assembly, part of the ribosomal stalk of the 50S ribosomal subunit. The N-terminus interacts with L11 and the large rRNA to form the base of the stalk. The C-terminus forms an elongated spine to which L12 dimers bind in a sequential fashion forming a multimeric L10(L12)X complex.

In terms of biological role, forms part of the ribosomal stalk, playing a central role in the interaction of the ribosome with GTP-bound translation factors. The protein is Large ribosomal subunit protein uL10 of Stutzerimonas stutzeri (strain A1501) (Pseudomonas stutzeri).